The sequence spans 496 residues: Glycerol kinase (496 aa).

Position 12 (threonine 12) interacts with ADP. ATP is bound by residues threonine 12, threonine 13, and serine 14. Threonine 12 lines the sn-glycerol 3-phosphate pocket. Residue arginine 16 coordinates ADP. Positions 82, 83, and 134 each coordinate sn-glycerol 3-phosphate. Residues arginine 82, glutamate 83, and tyrosine 134 each coordinate glycerol. The residue at position 230 (histidine 230) is a Phosphohistidine; by HPr. Aspartate 244 is a binding site for sn-glycerol 3-phosphate. Glycerol-binding residues include aspartate 244 and glutamine 245. The ADP site is built by threonine 266 and glycine 309. Threonine 266, glycine 309, glutamine 313, and glycine 410 together coordinate ATP. 2 residues coordinate ADP: glycine 410 and asparagine 414.

Belongs to the FGGY kinase family. In terms of assembly, homotetramer and homodimer (in equilibrium). The phosphoenolpyruvate-dependent sugar phosphotransferase system (PTS), including enzyme I, and histidine-containing protein (HPr) are required for the phosphorylation, which leads to the activation of the enzyme.

It carries out the reaction glycerol + ATP = sn-glycerol 3-phosphate + ADP + H(+). It participates in polyol metabolism; glycerol degradation via glycerol kinase pathway; sn-glycerol 3-phosphate from glycerol: step 1/1. With respect to regulation, activated by phosphorylation and inhibited by fructose 1,6-bisphosphate (FBP). Functionally, key enzyme in the regulation of glycerol uptake and metabolism. Catalyzes the phosphorylation of glycerol to yield sn-glycerol 3-phosphate. The chain is Glycerol kinase from Geobacillus kaustophilus (strain HTA426).